The chain runs to 160 residues: Glutathione peroxidase homolog BsaA (160 aa).

Cys-35 is a catalytic residue.

It belongs to the glutathione peroxidase family.

The polypeptide is Glutathione peroxidase homolog BsaA (bsaA) (Bacillus subtilis (strain 168)).